Consider the following 213-residue polypeptide: N-(5'-phosphoribosyl)anthranilate isomerase (213 aa).

The protein belongs to the TrpF family.

It carries out the reaction N-(5-phospho-beta-D-ribosyl)anthranilate = 1-(2-carboxyphenylamino)-1-deoxy-D-ribulose 5-phosphate. The protein operates within amino-acid biosynthesis; L-tryptophan biosynthesis; L-tryptophan from chorismate: step 3/5. In Rhodopseudomonas palustris (strain ATCC BAA-98 / CGA009), this protein is N-(5'-phosphoribosyl)anthranilate isomerase.